The chain runs to 303 residues: Ribosomal protein uL3 glutamine methyltransferase (303 aa).

Belongs to the protein N5-glutamine methyltransferase family. PrmB subfamily.

The enzyme catalyses L-glutaminyl-[ribosomal protein uL3] + S-adenosyl-L-methionine = N(5)-methyl-L-glutaminyl-[ribosomal protein uL3] + S-adenosyl-L-homocysteine + H(+). Methylates large ribosomal subunit protein uL3 on a specific glutamine residue. The sequence is that of Ribosomal protein uL3 glutamine methyltransferase from Neisseria meningitidis serogroup A / serotype 4A (strain DSM 15465 / Z2491).